Reading from the N-terminus, the 240-residue chain is Small ribosomal subunit protein uS2c (240 aa).

The protein belongs to the universal ribosomal protein uS2 family.

It is found in the plastid. The protein resides in the chloroplast. The sequence is that of Small ribosomal subunit protein uS2c (rps2) from Cycas taitungensis (Prince sago).